Here is a 256-residue protein sequence, read N- to C-terminus: Acetyl-coenzyme A carboxylase carboxyl transferase subunit alpha (256 aa).

Positions 1-236 (MTDVSRVLKE…KANLIEQITS (236 aa)) constitute a CoA carboxyltransferase C-terminal domain.

It belongs to the AccA family. Acetyl-CoA carboxylase is a heterohexamer composed of biotin carboxyl carrier protein (AccB), biotin carboxylase (AccC) and two subunits each of ACCase subunit alpha (AccA) and ACCase subunit beta (AccD).

It is found in the cytoplasm. It carries out the reaction N(6)-carboxybiotinyl-L-lysyl-[protein] + acetyl-CoA = N(6)-biotinyl-L-lysyl-[protein] + malonyl-CoA. The protein operates within lipid metabolism; malonyl-CoA biosynthesis; malonyl-CoA from acetyl-CoA: step 1/1. In terms of biological role, component of the acetyl coenzyme A carboxylase (ACC) complex. First, biotin carboxylase catalyzes the carboxylation of biotin on its carrier protein (BCCP) and then the CO(2) group is transferred by the carboxyltransferase to acetyl-CoA to form malonyl-CoA. The chain is Acetyl-coenzyme A carboxylase carboxyl transferase subunit alpha from Streptococcus pyogenes serotype M2 (strain MGAS10270).